The primary structure comprises 401 residues: Carbamoyl phosphate synthase small chain (401 aa).

Residues 1–203 (MTATPAWTIQ…EGYSTLGETD (203 aa)) are CPSase. Residues Ser56, Gly255, and Gly257 each coordinate L-glutamine. In terms of domain architecture, Glutamine amidotransferase type-1 spans 207–395 (HVVALDYGVK…LNLIREKKGE (189 aa)). The Nucleophile role is filled by Cys284. L-glutamine contacts are provided by Leu285, Gln288, Asn326, Gly328, and Phe329. Catalysis depends on residues His368 and Glu370.

The protein belongs to the CarA family. As to quaternary structure, composed of two chains; the small (or glutamine) chain promotes the hydrolysis of glutamine to ammonia, which is used by the large (or ammonia) chain to synthesize carbamoyl phosphate. Tetramer of heterodimers (alpha,beta)4.

The enzyme catalyses hydrogencarbonate + L-glutamine + 2 ATP + H2O = carbamoyl phosphate + L-glutamate + 2 ADP + phosphate + 2 H(+). It catalyses the reaction L-glutamine + H2O = L-glutamate + NH4(+). It functions in the pathway amino-acid biosynthesis; L-arginine biosynthesis; carbamoyl phosphate from bicarbonate: step 1/1. It participates in pyrimidine metabolism; UMP biosynthesis via de novo pathway; (S)-dihydroorotate from bicarbonate: step 1/3. Small subunit of the glutamine-dependent carbamoyl phosphate synthetase (CPSase). CPSase catalyzes the formation of carbamoyl phosphate from the ammonia moiety of glutamine, carbonate, and phosphate donated by ATP, constituting the first step of 2 biosynthetic pathways, one leading to arginine and/or urea and the other to pyrimidine nucleotides. The small subunit (glutamine amidotransferase) binds and cleaves glutamine to supply the large subunit with the substrate ammonia. The chain is Carbamoyl phosphate synthase small chain from Rhizobium meliloti (strain 1021) (Ensifer meliloti).